Consider the following 372-residue polypeptide: uncharacterized protein (372 aa).

A signal peptide spans 1–24; the sequence is MSYYQIIVCILASISYIILLEVIA. A PA domain is found at 92-215; sequence PNRNDTDASY…SSYNLLWSDL (124 aa). The helical transmembrane segment at 236–256 threads the bilayer; the sequence is FWPFLLCFSPSIIMLITVQAL. Ser280 is modified (phosphoserine). An RING-type; atypical zinc finger spans residues 321-363; that stretch reads CVICLESFTKGDKVVALPCKHEFHRPCIAKWIVDYRHACPTCN.

The protein resides in the golgi apparatus membrane. It is found in the vacuole membrane. This is an uncharacterized protein from Schizosaccharomyces pombe (strain 972 / ATCC 24843) (Fission yeast).